Reading from the N-terminus, the 182-residue chain is Biotin transporter BioY2 (182 aa).

The next 5 membrane-spanning stretches (helical) occupy residues 12-32, 54-74, 78-98, 111-131, and 150-170; these read IALGAAIIAVLSPLAIPIGIV, FFAILLYLLLGFIGIPVFTGG, IAVLFGPTGGFLLAFLVMGTL, IPAFIINIVGHLLMLVIGTLW, and PFVFVEIIKAILVTIFGLALI.

This sequence belongs to the BioY family. In E.coli forms a stable energy-coupling factor (ECF) transporter complex composed of 2 membrane-embedded substrate-binding protein (S component), 2 ATP-binding proteins (A and A' components) and 2 transmembrane proteins (T component), probably with a stoichiometry of 2:1:1:2. May be able to interact with more than 1 S component at a time.

It localises to the cell membrane. Functionally, probably a biotin-binding protein that interacts with the energy-coupling factor (ECF) ABC-transporter complex. Unlike classic ABC transporters this ECF transporter provides the energy necessary to transport a number of different substrates. The substrates themselves are bound by transmembrane, not extracytoplasmic soluble proteins. The polypeptide is Biotin transporter BioY2 (bioY2) (Lactococcus lactis subsp. cremoris (strain MG1363)).